Consider the following 409-residue polypeptide: Glutamate--tRNA ligase 2 (409 aa).

The 'HIGH' region motif lies at 9–19 (PSPTGNLHIGG). The 'KMSKS' region signature appears at 198–202 (KLSKR). Lys-201 serves as a coordination point for ATP.

The protein belongs to the class-I aminoacyl-tRNA synthetase family. Glutamate--tRNA ligase type 1 subfamily. Monomer.

The protein localises to the cytoplasm. It catalyses the reaction tRNA(Glu) + L-glutamate + ATP = L-glutamyl-tRNA(Glu) + AMP + diphosphate. Its function is as follows. Catalyzes the attachment of glutamate to tRNA(Glu) in a two-step reaction: glutamate is first activated by ATP to form Glu-AMP and then transferred to the acceptor end of tRNA(Glu). The chain is Glutamate--tRNA ligase 2 from Neorickettsia sennetsu (strain ATCC VR-367 / Miyayama) (Ehrlichia sennetsu).